A 402-amino-acid chain; its full sequence is Deoxyguanosinetriphosphate triphosphohydrolase-like protein (402 aa).

The 149-residue stretch at 69–217 (RLTHSLEVAQ…AAIADDIAYD (149 aa)) folds into the HD domain.

The protein belongs to the dGTPase family. Type 2 subfamily.

The sequence is that of Deoxyguanosinetriphosphate triphosphohydrolase-like protein from Bradyrhizobium diazoefficiens (strain JCM 10833 / BCRC 13528 / IAM 13628 / NBRC 14792 / USDA 110).